The chain runs to 73 residues: Sec-independent protein translocase protein TatA (73 aa).

A helical transmembrane segment spans residues 1 to 21 (MGSFSIWHWVIVLVVVVLIFG). Residues 43 to 73 (MKSEGEDAAQTPPAAQKEGGRVIDAEPADKK) are disordered. The span at 60–73 (EGGRVIDAEPADKK) shows a compositional bias: basic and acidic residues.

It belongs to the TatA/E family. The Tat system comprises two distinct complexes: a TatABC complex, containing multiple copies of TatA, TatB and TatC subunits, and a separate TatA complex, containing only TatA subunits. Substrates initially bind to the TatABC complex, which probably triggers association of the separate TatA complex to form the active translocon.

Its subcellular location is the cell inner membrane. Its function is as follows. Part of the twin-arginine translocation (Tat) system that transports large folded proteins containing a characteristic twin-arginine motif in their signal peptide across membranes. TatA could form the protein-conducting channel of the Tat system. This Laribacter hongkongensis (strain HLHK9) protein is Sec-independent protein translocase protein TatA.